A 478-amino-acid chain; its full sequence is ATP synthase subunit beta (478 aa).

An ATP-binding site is contributed by 161 to 168 (GGAGVGKT).

It belongs to the ATPase alpha/beta chains family. F-type ATPases have 2 components, CF(1) - the catalytic core - and CF(0) - the membrane proton channel. CF(1) has five subunits: alpha(3), beta(3), gamma(1), delta(1), epsilon(1). CF(0) has four main subunits: a(1), b(1), b'(1) and c(9-12).

It localises to the cell inner membrane. The catalysed reaction is ATP + H2O + 4 H(+)(in) = ADP + phosphate + 5 H(+)(out). Its function is as follows. Produces ATP from ADP in the presence of a proton gradient across the membrane. The catalytic sites are hosted primarily by the beta subunits. This is ATP synthase subunit beta from Gloeobacter violaceus (strain ATCC 29082 / PCC 7421).